The chain runs to 340 residues: Coproporphyrin III ferrochelatase (340 aa).

The Fe-coproporphyrin III site is built by Ser-52 and Tyr-121. Residues His-181 and Glu-264 each coordinate Fe(2+).

Belongs to the ferrochelatase family.

The protein localises to the cytoplasm. It carries out the reaction Fe-coproporphyrin III + 2 H(+) = coproporphyrin III + Fe(2+). It functions in the pathway porphyrin-containing compound metabolism; protoheme biosynthesis. In terms of biological role, involved in coproporphyrin-dependent heme b biosynthesis. Catalyzes the insertion of ferrous iron into coproporphyrin III to form Fe-coproporphyrin III. This Mycolicibacterium smegmatis (strain ATCC 700084 / mc(2)155) (Mycobacterium smegmatis) protein is Coproporphyrin III ferrochelatase.